The following is a 414-amino-acid chain: Snake venom metalloproteinase atrolysin-B (414 aa).

A signal peptide spans Met1 to Ser20. The propeptide occupies Ile21 to Asp190. Gln191 carries the post-translational modification Pyrrolidone carboxylic acid. The Peptidase M12B domain occupies Arg197–Pro393. The Ca(2+) site is built by Glu200 and Asp284. Intrachain disulfides connect Cys308–Cys388 and Cys348–Cys355. His333 lines the Zn(2+) pocket. The active site involves Glu334. Zn(2+)-binding residues include His337 and His343. The Ca(2+) site is built by Cys388, Asn391, Val403, Asn406, Leu408, Glu410, and Glu413. Residues Leu394–Glu414 constitute a propeptide that is removed on maturation.

The protein belongs to the venom metalloproteinase (M12B) family. P-I subfamily. In terms of assembly, monomer. The cofactor is Zn(2+). The N-terminus is blocked. As to expression, expressed by the venom gland.

The protein localises to the secreted. The catalysed reaction is Cleavage of 5-His-|-Leu-6, 10-His-|-Leu-11, 14-Ala-|-Leu-15, 16-Tyr-|-Leu-17 and 23-Gly-|-Phe-24 of insulin B chain. Identical to the cleavage of insulin B chain by atrolysin C. Also cleaves Xaa-|-Ser bonds in glucagon.. Snake venom metalloproteinase that impairs hemostasis in the envenomed animal. This Crotalus atrox (Western diamondback rattlesnake) protein is Snake venom metalloproteinase atrolysin-B.